The chain runs to 58 residues: Large ribosomal subunit protein bL32 (58 aa).

Belongs to the bacterial ribosomal protein bL32 family.

The sequence is that of Large ribosomal subunit protein bL32 from Caldicellulosiruptor saccharolyticus (strain ATCC 43494 / DSM 8903 / Tp8T 6331).